The following is a 92-amino-acid chain: Large ribosomal subunit protein bL27 (92 aa).

The segment at 1 to 26 (MAHKKGASSSSNGRDSESKRLGVKRF) is disordered.

Belongs to the bacterial ribosomal protein bL27 family.

In Corynebacterium aurimucosum (strain ATCC 700975 / DSM 44827 / CIP 107346 / CN-1) (Corynebacterium nigricans), this protein is Large ribosomal subunit protein bL27.